The primary structure comprises 288 residues: 4-diphosphocytidyl-2-C-methyl-D-erythritol kinase (288 aa).

Residue lysine 13 is part of the active site. Proline 97–serine 107 lines the ATP pocket. Residue aspartate 139 is part of the active site.

The protein belongs to the GHMP kinase family. IspE subfamily.

It carries out the reaction 4-CDP-2-C-methyl-D-erythritol + ATP = 4-CDP-2-C-methyl-D-erythritol 2-phosphate + ADP + H(+). The protein operates within isoprenoid biosynthesis; isopentenyl diphosphate biosynthesis via DXP pathway; isopentenyl diphosphate from 1-deoxy-D-xylulose 5-phosphate: step 3/6. Catalyzes the phosphorylation of the position 2 hydroxy group of 4-diphosphocytidyl-2C-methyl-D-erythritol. In Saccharophagus degradans (strain 2-40 / ATCC 43961 / DSM 17024), this protein is 4-diphosphocytidyl-2-C-methyl-D-erythritol kinase.